The primary structure comprises 746 residues: Protein zyg-11 homolog (746 aa).

LRR repeat units follow at residues 185–209, 216–241, and 265–289; these read LPRLESLDISNTSVSNLTPLLGLRS, MHQLKRLEMTTAQLLAVLSQLEVLQH, and LPQLVSLDVSGRKQVTDAAVKAFVE.

This sequence belongs to the zyg-11 family.

Functionally, serves as substrate adapter subunit in an E3 ubiquitin ligase complex zyg11-cul2-elongin BC. Targets substrates bearing N-terminal glycine degrons for proteasomal degradation. This chain is Protein zyg-11 homolog (zyg11), found in Danio rerio (Zebrafish).